Reading from the N-terminus, the 202-residue chain is UPF0056 membrane protein CPn_1010/CP_0843/CPj1010/CpB1048 (202 aa).

The next 6 membrane-spanning stretches (helical) occupy residues 7-27, 39-59, 61-81, 105-125, 137-157, and 175-195; these read LSLL…FVAL, VILR…TFGR, FFQF…FLLF, PIFF…TALL, IIFT…LCSS, and FGIA…SIAF.

This sequence belongs to the UPF0056 (MarC) family.

It localises to the cell membrane. The protein is UPF0056 membrane protein CPn_1010/CP_0843/CPj1010/CpB1048 of Chlamydia pneumoniae (Chlamydophila pneumoniae).